We begin with the raw amino-acid sequence, 243 residues long: Voltage-gated monoatomic cation channel TMEM109 (243 aa).

The first 33 residues, 1-33 (MAGAHSNPSWSRHLFKAVLMVLGALLLVHSASA), serve as a signal peptide directing secretion. Over 34–83 (QTHREFASPGQQKRESSADILTEIGRSLKETLDTWLGPETMHVISETLLQ) the chain is Lumenal. Residues 84–104 (VMWAISSAISVACFALSGIAA) form a helical membrane-spanning segment. At 105-135 (QLLSALGLDGEQLTQVLKLSPSQVQTLLLWG) the chain is on the cytoplasmic side. A helical transmembrane segment spans residues 136–156 (AAALVIYWLLSLLLGLVLALL). At 157–185 (GRILGGLKLVLFVAGFVGLVRSVPDPSTR) the chain is on the lumenal side. A helical membrane pass occupies residues 186–205 (ALLLLALLTVFALLSRLTGS). The Cytoplasmic portion of the chain corresponds to 206 to 243 (RSSGTHLEAKVRGLERQIEELRGRQRRAAKIPRSMEEE).

As to quaternary structure, homooligomer. Interacts with CRYAB; in the cellular response to DNA damage.

Its subcellular location is the nucleus outer membrane. The protein resides in the endoplasmic reticulum membrane. It is found in the sarcoplasmic reticulum membrane. The catalysed reaction is K(+)(in) = K(+)(out). It catalyses the reaction Ca(2+)(in) = Ca(2+)(out). In terms of biological role, functions as a voltage-gated monoatomic cation channel permeable to both potassium and calcium. Plays a role in the cellular response to DNA damage. The polypeptide is Voltage-gated monoatomic cation channel TMEM109 (Rattus norvegicus (Rat)).